The following is a 419-amino-acid chain: 3-isopropylmalate dehydratase large subunit (419 aa).

Positions 300, 360, and 363 each coordinate [4Fe-4S] cluster.

Belongs to the aconitase/IPM isomerase family. LeuC type 2 subfamily. Heterodimer of LeuC and LeuD. The cofactor is [4Fe-4S] cluster.

The catalysed reaction is (2R,3S)-3-isopropylmalate = (2S)-2-isopropylmalate. It functions in the pathway amino-acid biosynthesis; L-leucine biosynthesis; L-leucine from 3-methyl-2-oxobutanoate: step 2/4. Functionally, catalyzes the isomerization between 2-isopropylmalate and 3-isopropylmalate, via the formation of 2-isopropylmaleate. This is 3-isopropylmalate dehydratase large subunit from Acetivibrio thermocellus (strain ATCC 27405 / DSM 1237 / JCM 9322 / NBRC 103400 / NCIMB 10682 / NRRL B-4536 / VPI 7372) (Clostridium thermocellum).